Reading from the N-terminus, the 342-residue chain is Renalase (342 aa).

A signal peptide spans 1-17 (MAQVLIVGAGMTGSLCA). Residues Thr12, Arg42, and 61 to 62 (QY) contribute to the FAD site.

Belongs to the renalase family. The cofactor is FAD. In terms of tissue distribution, secreted into the blood by the kidney. Highly expressed in the kidney, expressed at lower level in heart, skeletal muscle and small intestine. Its plasma concentration is markedly reduced in patients with end-stage renal disease, as compared with healthy subjects.

Its subcellular location is the secreted. The enzyme catalyses 1,2-dihydro-beta-NAD + O2 + H(+) = H2O2 + NAD(+). It carries out the reaction 1,2-dihydro-beta-NADP + O2 + H(+) = H2O2 + NADP(+). The catalysed reaction is 1,6-dihydro-beta-NADP + O2 + H(+) = H2O2 + NADP(+). It catalyses the reaction 1,6-dihydro-beta-NAD + O2 + H(+) = H2O2 + NAD(+). Catalyzes the oxidation of the less abundant 1,2-dihydro-beta-NAD(P) and 1,6-dihydro-beta-NAD(P) to form beta-NAD(P)(+). The enzyme hormone is secreted by the kidney, and circulates in blood and modulates cardiac function and systemic blood pressure. Lowers blood pressure in vivo by decreasing cardiac contractility and heart rate and preventing a compensatory increase in peripheral vascular tone, suggesting a causal link to the increased plasma catecholamine and heightened cardiovascular risk. High concentrations of catecholamines activate plasma renalase and promotes its secretion and synthesis. This Homo sapiens (Human) protein is Renalase (RNLS).